We begin with the raw amino-acid sequence, 134 residues long: UPF0299 membrane protein KPK_1586 (134 aa).

A run of 4 helical transmembrane segments spans residues 5–25, 26–46, 66–86, and 93–113; these read LTIIWQYLRAFVLIYACLYAG, IFIAGLLPITIPGSIIGMLIL, ILIRYMALLFVPIGVGVMQYW, and LGPVVISCAISTLVVFVVVSW.

This sequence belongs to the UPF0299 family.

Its subcellular location is the cell inner membrane. The chain is UPF0299 membrane protein KPK_1586 from Klebsiella pneumoniae (strain 342).